We begin with the raw amino-acid sequence, 513 residues long: ATP synthase subunit alpha (513 aa).

169-176 (GDRQVGKT) is a binding site for ATP.

The protein belongs to the ATPase alpha/beta chains family. F-type ATPases have 2 components, CF(1) - the catalytic core - and CF(0) - the membrane proton channel. CF(1) has five subunits: alpha(3), beta(3), gamma(1), delta(1), epsilon(1). CF(0) has three main subunits: a(1), b(2) and c(9-12). The alpha and beta chains form an alternating ring which encloses part of the gamma chain. CF(1) is attached to CF(0) by a central stalk formed by the gamma and epsilon chains, while a peripheral stalk is formed by the delta and b chains.

Its subcellular location is the cell inner membrane. It catalyses the reaction ATP + H2O + 4 H(+)(in) = ADP + phosphate + 5 H(+)(out). Produces ATP from ADP in the presence of a proton gradient across the membrane. The alpha chain is a regulatory subunit. This chain is ATP synthase subunit alpha, found in Aeromonas hydrophila subsp. hydrophila (strain ATCC 7966 / DSM 30187 / BCRC 13018 / CCUG 14551 / JCM 1027 / KCTC 2358 / NCIMB 9240 / NCTC 8049).